Reading from the N-terminus, the 402-residue chain is Thyroid hormone receptor alpha (402 aa).

The interval Met1–Gly22 is disordered. A modulating region spans residues Met1–Gln50. Ser12 carries the post-translational modification Phosphoserine; by CK2. Phosphoserine is present on Ser28. Positions 51, 54, 68, 71, 89, 95, 105, and 108 each coordinate Zn(2+). 2 NR C4-type zinc fingers span residues Cys51–Cys71 and Cys89–Cys113. The nuclear receptor DNA-binding region spans Cys51–Tyr125. In terms of domain architecture, NR LBD spans Glu161–Val402. Residues Arg226 and Ser275 each coordinate 3,3',5-triiodo-L-thyronine.

It belongs to the nuclear hormone receptor family. NR1 subfamily. In terms of assembly, probably interacts with SFPQ.

It is found in the nucleus. Functionally, nuclear hormone receptor that can act as a repressor or activator of transcription. High affinity receptor for thyroid hormones, including triiodothyronine and thyroxine. The polypeptide is Thyroid hormone receptor alpha (THRA) (Pygoscelis adeliae (Adelie penguin)).